We begin with the raw amino-acid sequence, 480 residues long: Gamma-aminobutyric acid receptor subunit rho-1 (480 aa).

Residues 1-21 form the signal peptide; that stretch reads MLAVRNMKFGIFLLWWGWVLA. The Extracellular portion of the chain corresponds to 22–281; sequence AESTVHWPGR…LYINFTLRRH (260 aa). The segment at 31–67 is disordered; sequence REVHEPSKKGSRPQRQRRGAHDDAHKQGSPILKRSSD. The span at 39-48 shows a compositional bias: basic residues; sequence KGSRPQRQRR. Residue Arg-126 coordinates 4-aminobutanoate. A glycan (N-linked (GlcNAc...) asparagine) is linked at Asn-141. Ser-190 provides a ligand contact to 4-aminobutanoate. Residues Cys-199 and Cys-213 are joined by a disulfide bond. Glu-218 serves as a coordination point for 4-aminobutanoate. N-linked (GlcNAc...) asparagine glycans are attached at residues Asn-235 and Asn-275. The helical transmembrane segment at 282–302 threads the bilayer; sequence IFFFLLQTYFPATLMVMLSWV. At 303–314 the chain is on the cytoplasmic side; the sequence is SFWIDRRAVPAR. Residues 315–335 form a helical membrane-spanning segment; sequence VPLGITTVLTMSTIITGVNAS. Residues 336–346 lie on the Extracellular side of the membrane; the sequence is MPRVSYIKAVD. Residues 347-367 form a helical membrane-spanning segment; sequence IYLWVSFVFVFLSVLEYAAVN. Residues 368–458 lie on the Cytoplasmic side of the membrane; that stretch reads YLTTVQERKE…MRINTHAIDK (91 aa). Residues 459 to 479 form a helical membrane-spanning segment; sequence YSRIIFPAAYILFNLIYWSIF. Ser-480 is a topological domain (extracellular).

Belongs to the ligand-gated ion channel (TC 1.A.9) family. Gamma-aminobutyric acid receptor (TC 1.A.9.5) subfamily. GABRR1 sub-subfamily. As to quaternary structure, three rho subunits (rho-1/GBRR1, rho-2/GBRR2 and rho-3/GBRR3) coassemble either to form functional homopentamers or heteropentamers. Rho-1/GBRR1 subunits can also associate with alpha-1/GBRA1 subunits to form a functional GABAAR. Interacts with SQSTM1.

The protein resides in the postsynaptic cell membrane. Its subcellular location is the cell membrane. The enzyme catalyses chloride(in) = chloride(out). Inhibited by TPMPA, a rho-specific antagonist. Inhibited by picrotoxin, when forming a homopentamer. In contrast with other GABAARs, rho-1 GABAAR is not inhibited by bicuculline, when forming a homopentamer. Down-regulated by external protons when forming a homopentamer. In terms of biological role, rho subunit of the pentameric ligand-gated chloride channels responsible for mediating the effects of gamma-aminobutyric acid (GABA), the major inhibitory neurotransmitter in the brain. Rho-containing GABA-gated chloride channels are a subclass of GABA(A) receptors (GABAARs) entirely composed of rho subunits, where GABA molecules bind at the rho intersubunit interfaces. When activated by GABA, rho-GABAARs selectively allow the flow of chloride anions across the cell membrane down their electrochemical gradient. Rho-1 subunits are primarily expressed in retina where rho-1-containing GABAARs may play a role in retinal neurotransmission. Rho-1 GABAARs are also involved in neuronal tonic (extrasynaptic) and phasic (synaptic) transmission in the Purkinje neurons of the cerebellum. Rho-1 GABAARs may also contribute to the regulation of glial development in the cerebellum by controlling extrasynaptic transmission. This Rattus norvegicus (Rat) protein is Gamma-aminobutyric acid receptor subunit rho-1.